Here is a 660-residue protein sequence, read N- to C-terminus: Threonine--tRNA ligase (660 aa).

The TGS domain occupies 1-49 (MPDSIVHVKKGQRFLDVIKDKNVVAVKIDSVLHDLRDVAERDVDAIPVS). The interval 225-554 (DHRRIIAEMD…LLEHYAGKLP (330 aa)) is catalytic. Cys318, His369, and His531 together coordinate Zn(2+).

Belongs to the class-II aminoacyl-tRNA synthetase family. As to quaternary structure, homodimer. Zn(2+) serves as cofactor.

The protein resides in the cytoplasm. The enzyme catalyses tRNA(Thr) + L-threonine + ATP = L-threonyl-tRNA(Thr) + AMP + diphosphate + H(+). In terms of biological role, catalyzes the attachment of threonine to tRNA(Thr) in a two-step reaction: L-threonine is first activated by ATP to form Thr-AMP and then transferred to the acceptor end of tRNA(Thr). The polypeptide is Threonine--tRNA ligase (Thermoplasma acidophilum (strain ATCC 25905 / DSM 1728 / JCM 9062 / NBRC 15155 / AMRC-C165)).